Consider the following 207-residue polypeptide: Putative acetyltransferase C18B11.09c (207 aa).

The protein belongs to the transferase hexapeptide repeat family.

This is Putative acetyltransferase C18B11.09c from Schizosaccharomyces pombe (strain 972 / ATCC 24843) (Fission yeast).